The sequence spans 420 residues: Glutamate dehydrogenase (420 aa).

K105 is a catalytic residue. 220-226 (GYGNAGY) provides a ligand contact to NAD(+).

It belongs to the Glu/Leu/Phe/Val dehydrogenases family. In terms of assembly, homohexamer.

It is found in the cytoplasm. It carries out the reaction L-glutamate + NAD(+) + H2O = 2-oxoglutarate + NH4(+) + NADH + H(+). It catalyses the reaction L-glutamate + NADP(+) + H2O = 2-oxoglutarate + NH4(+) + NADPH + H(+). The protein is Glutamate dehydrogenase (gdhA) of Pyrococcus endeavori.